Consider the following 200-residue polypeptide: Ribonuclease HII (200 aa).

An RNase H type-2 domain is found at 6 to 200; it reads ESIAGVDEVG…KLFAVHGSLT (195 aa). Residues aspartate 12, glutamate 13, and aspartate 108 each coordinate a divalent metal cation.

The protein belongs to the RNase HII family. Mn(2+) is required as a cofactor. It depends on Mg(2+) as a cofactor.

It localises to the cytoplasm. The enzyme catalyses Endonucleolytic cleavage to 5'-phosphomonoester.. In terms of biological role, endonuclease that specifically degrades the RNA of RNA-DNA hybrids. The chain is Ribonuclease HII from Prochlorococcus marinus (strain MIT 9303).